Reading from the N-terminus, the 197-residue chain is Chromophore lyase CpcT/CpeT (197 aa).

The protein belongs to the CpcT/CpeT biliprotein lyase family.

In terms of biological role, covalently attaches a chromophore to Cys residue(s) of phycobiliproteins. The sequence is that of Chromophore lyase CpcT/CpeT from Synechococcus sp. (strain WH8103).